Here is a 374-residue protein sequence, read N- to C-terminus: Carbamoyl phosphate synthase small chain (374 aa).

A CPSase region spans residues 1–186; it reads MTEPAILVLE…DRNEWKRAAP (186 aa). The L-glutamine site is built by serine 47, glycine 237, and glycine 239. Residues 189–374 form the Glutamine amidotransferase type-1 domain; it reads KVVAYDYGVK…RFITMMAAQS (186 aa). Cysteine 265 serves as the catalytic Nucleophile. 5 residues coordinate L-glutamine: leucine 266, glutamine 269, asparagine 307, glycine 309, and phenylalanine 310. Catalysis depends on residues histidine 349 and glutamate 351.

This sequence belongs to the CarA family. In terms of assembly, composed of two chains; the small (or glutamine) chain promotes the hydrolysis of glutamine to ammonia, which is used by the large (or ammonia) chain to synthesize carbamoyl phosphate. Tetramer of heterodimers (alpha,beta)4.

The enzyme catalyses hydrogencarbonate + L-glutamine + 2 ATP + H2O = carbamoyl phosphate + L-glutamate + 2 ADP + phosphate + 2 H(+). The catalysed reaction is L-glutamine + H2O = L-glutamate + NH4(+). It functions in the pathway amino-acid biosynthesis; L-arginine biosynthesis; carbamoyl phosphate from bicarbonate: step 1/1. Its pathway is pyrimidine metabolism; UMP biosynthesis via de novo pathway; (S)-dihydroorotate from bicarbonate: step 1/3. Small subunit of the glutamine-dependent carbamoyl phosphate synthetase (CPSase). CPSase catalyzes the formation of carbamoyl phosphate from the ammonia moiety of glutamine, carbonate, and phosphate donated by ATP, constituting the first step of 2 biosynthetic pathways, one leading to arginine and/or urea and the other to pyrimidine nucleotides. The small subunit (glutamine amidotransferase) binds and cleaves glutamine to supply the large subunit with the substrate ammonia. The chain is Carbamoyl phosphate synthase small chain from Xylella fastidiosa (strain 9a5c).